The following is a 158-amino-acid chain: 2-C-methyl-D-erythritol 2,4-cyclodiphosphate synthase (158 aa).

Asp-8 and His-10 together coordinate a divalent metal cation. 4-CDP-2-C-methyl-D-erythritol 2-phosphate-binding positions include 8 to 10 (DVH) and 34 to 35 (HS). His-42 contacts a divalent metal cation. 4-CDP-2-C-methyl-D-erythritol 2-phosphate-binding positions include 56-58 (DIG), 132-135 (TTNE), and Arg-142.

It belongs to the IspF family. In terms of assembly, homotrimer. Requires a divalent metal cation as cofactor.

It catalyses the reaction 4-CDP-2-C-methyl-D-erythritol 2-phosphate = 2-C-methyl-D-erythritol 2,4-cyclic diphosphate + CMP. It participates in isoprenoid biosynthesis; isopentenyl diphosphate biosynthesis via DXP pathway; isopentenyl diphosphate from 1-deoxy-D-xylulose 5-phosphate: step 4/6. In terms of biological role, involved in the biosynthesis of isopentenyl diphosphate (IPP) and dimethylallyl diphosphate (DMAPP), two major building blocks of isoprenoid compounds. Catalyzes the conversion of 4-diphosphocytidyl-2-C-methyl-D-erythritol 2-phosphate (CDP-ME2P) to 2-C-methyl-D-erythritol 2,4-cyclodiphosphate (ME-CPP) with a corresponding release of cytidine 5-monophosphate (CMP). This Chlorobium phaeobacteroides (strain DSM 266 / SMG 266 / 2430) protein is 2-C-methyl-D-erythritol 2,4-cyclodiphosphate synthase.